The chain runs to 523 residues: Cilia- and flagella-associated protein 157 (523 aa).

The tract at residues 1–31 (MAPKKKPNKGGKEMQGKKIGGKKDASGTKTP) is disordered. Over residues 10–26 (GGKEMQGKKIGGKKDAS) the composition is skewed to basic and acidic residues. A Phosphothreonine modification is found at threonine 30. Coiled-coil stretches lie at residues 32–191 (ELAM…LEKK), 248–274 (VQLL…LENT), and 302–371 (GTEE…VLIQ). The segment at 419-440 (QPDMGSHQDKQPQGLSKESQRI) is disordered. Residues 429–440 (QPQGLSKESQRI) are compositionally biased toward polar residues.

It belongs to the CFAP157 family. As to quaternary structure, interacts with TUBB and TUBA4A. Interacts with CEP350. As to expression, specifically expressed in tissues containing motile cilia.

The protein resides in the cytoplasm. Its subcellular location is the cytoskeleton. The protein localises to the cilium basal body. Functionally, specifically required during spermatogenesis for flagellum morphogenesis and sperm motility. May be required to suppress the formation of supernumerary axonemes and ensure a correct ultrastructure. The chain is Cilia- and flagella-associated protein 157 from Mus musculus (Mouse).